The following is a 371-amino-acid chain: Peptide chain release factor 2 (371 aa).

Gln-253 is subject to N5-methylglutamine.

Belongs to the prokaryotic/mitochondrial release factor family. Methylated by PrmC. Methylation increases the termination efficiency of RF2.

It is found in the cytoplasm. In terms of biological role, peptide chain release factor 2 directs the termination of translation in response to the peptide chain termination codons UGA and UAA. The protein is Peptide chain release factor 2 of Mycobacterium marinum (strain ATCC BAA-535 / M).